The chain runs to 458 residues: Tetracycline resistance protein (458 aa).

A run of 12 helical transmembrane segments spans residues 12–33 (HNQI…EMVL), 81–100 (LLLF…FVGH), 111–129 (FIQG…VVVA), 140–162 (AFGL…VGMI), 165–185 (YIHW…VPFL), 201–221 (IKGI…TTSY), 223–240 (ISFL…VKHI), 256–276 (ILFM…AGFV), 297–317 (VIIF…GILV), 324–344 (YVLN…FFLL), 346–365 (TTSW…LSFT), and 432–451 (LLLL…VNVY).

Belongs to the major facilitator superfamily. TCR/Tet family.

Its subcellular location is the cell membrane. Its function is as follows. Resistance to tetracycline by an active tetracycline efflux. This is an energy-dependent process that decreases the accumulation of the antibiotic in whole cells. This protein functions as a metal-tetracycline/H(+) antiporter. In Streptococcus agalactiae, this protein is Tetracycline resistance protein (tet).